We begin with the raw amino-acid sequence, 304 residues long: DCN1-like protein 3 (304 aa).

2 disordered regions span residues 1 to 86 and 284 to 304; these read MGQC…AEES and EGEG…EEQT. Gly-2 is lipidated: N-myristoyl glycine. The region spanning 86–278 is the DCUN1 domain; that stretch reads SSLQRLEELF…LFDTFVEWEM (193 aa).

In terms of assembly, part of a complex containing DCUN1D3, CUL3 and RBX1. Interacts (via the DCUN1 domain) with the unneddylated cullins: interacts with CUL1, CUL2, CUL3, CUL4A, CUL4B and CUL5; these interactions promote the cullin neddylation and the identity of the cullin dictates the affinity of the interaction. Interacts preferentially with CUL3; this interaction triggers the relocalization of CUL3 to the cell membrane where CUL3 is neddylated. Interacts (via DCUN1 domain) with RBX1. May also interact with regulators or subunits of cullin-RING ligases such as RNF7, ELOB and DDB1; these interactions are bridged by cullins. Interacts (via DCUN1 domain) with CAND1; this interaction is bridged by cullins and strongly inhibits cullin neddylation. These CAND-cullin-DCNL complexes can only be neddylated in the presence of a substrate adapter. Interacts (via DCUN1 domain) with the N-terminally acetylated form of UBE2M and UBE2F. As to expression, tends to be down-regulated in different type of cancers, including lung neuroendocrine carcinoma, thyroid Huerthle cell carcinoma and lung squamous cell carcinoma. Mostly expressed in testis and brain. Highly expressed in liver, bladder and renal normal tissue than their tumor tissue counterparts. Palmitoylation stabilizes DCUN1D3 at the cell membrane.

It localises to the cell membrane. Its subcellular location is the cytoplasm. The protein localises to the nucleus. The protein resides in the perinuclear region. Contributes to the neddylation of all cullins by transferring NEDD8 from N-terminally acetylated NEDD8-conjugating E2s enzyme to different cullin C-terminal domain-RBX complexes and may play a role in the cell cycle progression by regulating the SCF ubiquitin E3 ligase complex, after UV damage. At the cell membrane, can promote and as well inhibit cullins neddylation. In Homo sapiens (Human), this protein is DCN1-like protein 3.